A 161-amino-acid polypeptide reads, in one-letter code: PRS fimbrial major pilin protein (161 aa).

This sequence belongs to the fimbrial protein family.

It is found in the secreted. The protein localises to the fimbrium. In terms of biological role, fimbriae (also called pili), polar filaments radiating from the surface of the bacterium to a length of 0.5-1.5 micrometers and numbering 100-300 per cell, enable bacteria to colonize the epithelium of specific host organs. The sequence is that of PRS fimbrial major pilin protein (prsA) from Escherichia coli.